A 177-amino-acid polypeptide reads, in one-letter code: Large ribosomal subunit protein uL6 (177 aa).

Belongs to the universal ribosomal protein uL6 family. In terms of assembly, part of the 50S ribosomal subunit.

This protein binds to the 23S rRNA, and is important in its secondary structure. It is located near the subunit interface in the base of the L7/L12 stalk, and near the tRNA binding site of the peptidyltransferase center. In Shewanella denitrificans (strain OS217 / ATCC BAA-1090 / DSM 15013), this protein is Large ribosomal subunit protein uL6.